A 217-amino-acid polypeptide reads, in one-letter code: Adenylate kinase (217 aa).

10-15 provides a ligand contact to ATP; that stretch reads GAGKGT. The tract at residues 30 to 59 is NMP; sequence STGDIFRKNVADDTPLGRLAKQYMDAGDLV. Residues threonine 31, arginine 36, 57–59, 85–88, and glutamine 92 contribute to the AMP site; these read DLV and GFPR. The tract at residues 126 to 163 is LID; that stretch reads GRRTCADCAHVWHVTYDPPTVDGVCDLCGGKLFQREDD. Residue arginine 127 participates in ATP binding. Zn(2+)-binding residues include cysteine 130, cysteine 133, cysteine 150, and cysteine 153. Residues arginine 160 and arginine 171 each coordinate AMP. ATP is bound at residue glycine 199.

This sequence belongs to the adenylate kinase family. Monomer.

It localises to the cytoplasm. The enzyme catalyses AMP + ATP = 2 ADP. Its pathway is purine metabolism; AMP biosynthesis via salvage pathway; AMP from ADP: step 1/1. Its function is as follows. Catalyzes the reversible transfer of the terminal phosphate group between ATP and AMP. Plays an important role in cellular energy homeostasis and in adenine nucleotide metabolism. This Acidothermus cellulolyticus (strain ATCC 43068 / DSM 8971 / 11B) protein is Adenylate kinase.